Here is an 854-residue protein sequence, read N- to C-terminus: Golgin subfamily A member 6-like protein 22 (854 aa).

Disordered stretches follow at residues M1–A114, Q320–Q348, M366–Q447, Q481–Q568, R581–E681, and Q714–H854. The segment covering L15–T35 has biased composition (basic residues). Residues M45–P66 show a composition bias toward basic and acidic residues. Composition is skewed to polar residues over residues Q67–S77 and N85–G97. A compositionally biased stretch (basic and acidic residues) spans S100 to A114. Residues D103–H854 adopt a coiled-coil conformation.

Belongs to the GOLGA6 family.

The protein is Golgin subfamily A member 6-like protein 22 of Homo sapiens (Human).